Here is a 224-residue protein sequence, read N- to C-terminus: Urease accessory protein UreF (224 aa).

The protein belongs to the UreF family. As to quaternary structure, ureD, UreF and UreG form a complex that acts as a GTP-hydrolysis-dependent molecular chaperone, activating the urease apoprotein by helping to assemble the nickel containing metallocenter of UreC. The UreE protein probably delivers the nickel.

The protein localises to the cytoplasm. Functionally, required for maturation of urease via the functional incorporation of the urease nickel metallocenter. This is Urease accessory protein UreF from Klebsiella pneumoniae (strain 342).